The following is a 154-amino-acid chain: NADPH-dependent 7-cyano-7-deazaguanine reductase (154 aa).

Cys54 serves as the catalytic Thioimide intermediate. Catalysis depends on Asp61, which acts as the Proton donor. Substrate is bound by residues 76 to 78 and 95 to 96; these read VES and HE.

Belongs to the GTP cyclohydrolase I family. QueF type 1 subfamily.

It localises to the cytoplasm. It carries out the reaction 7-aminomethyl-7-carbaguanine + 2 NADP(+) = 7-cyano-7-deazaguanine + 2 NADPH + 3 H(+). It functions in the pathway tRNA modification; tRNA-queuosine biosynthesis. Catalyzes the NADPH-dependent reduction of 7-cyano-7-deazaguanine (preQ0) to 7-aminomethyl-7-deazaguanine (preQ1). This Porphyromonas gingivalis (strain ATCC 33277 / DSM 20709 / CIP 103683 / JCM 12257 / NCTC 11834 / 2561) protein is NADPH-dependent 7-cyano-7-deazaguanine reductase.